A 1308-amino-acid polypeptide reads, in one-letter code: Limbin (1308 aa).

Residues 1 to 26 (MDPSGSRGRPTWVLAGGLLAVALALG) form the signal peptide. At 27 to 300 (GRGCLGASSR…VLPHHGLHAA (274 aa)) the chain is on the extracellular side. The tract at residues 36–76 (RPRWRPLGAQPPRDPQVAPRSGPGLRIPPGRSGAGPESSTQ) is disordered. A glycan (N-linked (GlcNAc...) asparagine) is linked at Asn220. The helical transmembrane segment at 301 to 321 (GFFIAFLLSLVLTWAALFLMV) threads the bilayer. At 322–1308 (RYQCLKGNML…KKAMRALGMD (987 aa)) the chain is on the cytoplasmic side. 3 coiled-coil regions span residues 455–578 (TAEC…ELMD), 636–800 (DQME…DRDQ), and 1001–1113 (ASEM…EADT). The span at 784–801 (MAARAEQLEGEERDRDQE) shows a compositional bias: basic and acidic residues. The interval 784–816 (MAARAEQLEGEERDRDQEGVQSVRQRLKDDAPE) is disordered.

As to quaternary structure, component of the EvC complex composed of EFCAB7, IQCE, EVC2 and EVC; built from two subcomplexes, EVC2:EVC and EFCAB7:IQCE. Interacts with EVC. Interacts (via N-terminal end) with EFCAB7. Interacts (via N-terminal end) with IQCE. As to expression, found in the heart, placenta, lung, liver, skeletal muscle, kidney and pancreas.

It is found in the cell membrane. Its subcellular location is the cytoplasm. The protein localises to the cytoskeleton. The protein resides in the cilium basal body. It localises to the cell projection. It is found in the cilium. Its subcellular location is the cilium membrane. The protein localises to the nucleus. In terms of biological role, component of the EvC complex that positively regulates ciliary Hedgehog (Hh) signaling. Plays a critical role in bone formation and skeletal development. May be involved in early embryonic morphogenesis. This Homo sapiens (Human) protein is Limbin (EVC2).